A 129-amino-acid chain; its full sequence is MSNVPAELKYSKEHEWLRKEAYGTYTVGITEHAQELLGDMVFVDLPEVGATVSAGDDCAVAESVKAASDIYAPVSGEIVAVNDALSDSPELVNSEPYAGGWIFKIKASDESELESLLDATAYEALLEDE.

One can recognise a Lipoyl-binding domain in the interval 24 to 106 (TYTVGITEHA…YAGGWIFKIK (83 aa)). N6-lipoyllysine is present on lysine 65.

It belongs to the GcvH family. The glycine cleavage system is composed of four proteins: P, T, L and H. Requires (R)-lipoate as cofactor.

In terms of biological role, the glycine cleavage system catalyzes the degradation of glycine. The H protein shuttles the methylamine group of glycine from the P protein to the T protein. This chain is Glycine cleavage system H protein, found in Escherichia coli O127:H6 (strain E2348/69 / EPEC).